The primary structure comprises 250 residues: Proteasome subunit alpha type-2 (250 aa).

Residue lysine 108 forms a Glycyl lysine isopeptide (Lys-Gly) (interchain with G-Cter in ubiquitin) linkage.

The protein belongs to the peptidase T1A family. As to quaternary structure, the 26S proteasome consists of a 20S proteasome core and two 19S regulatory subunits. The 20S proteasome core is composed of 28 subunits that are arranged in four stacked rings, resulting in a barrel-shaped structure. The two end rings are each formed by seven alpha subunits, and the two central rings are each formed by seven beta subunits. The catalytic chamber with the active sites is on the inside of the barrel.

The protein resides in the cytoplasm. Its subcellular location is the nucleus. In terms of biological role, the proteasome degrades poly-ubiquitinated proteins in the cytoplasm and in the nucleus. It is essential for the regulated turnover of proteins and for the removal of misfolded proteins. The proteasome is a multicatalytic proteinase complex that is characterized by its ability to cleave peptides with Arg, Phe, Tyr, Leu, and Glu adjacent to the leaving group at neutral or slightly basic pH. It has an ATP-dependent proteolytic activity. The protein is Proteasome subunit alpha type-2 (PRE8) of Saccharomyces cerevisiae (strain ATCC 204508 / S288c) (Baker's yeast).